The sequence spans 73 residues: Potassium channel toxin alpha-KTx 27.4 (73 aa).

A signal peptide spans 1 to 26 (MKFLFLTLVLLYFTAILVFIVFPSYA).

Belongs to the short scorpion toxin superfamily. Potassium channel inhibitor family. Alpha-KTx 27 subfamily. In terms of processing, contains 4 disulfide bonds. Expressed by the venom gland.

It is found in the secreted. This Mesobuthus gibbosus (Mediterranean checkered scorpion) protein is Potassium channel toxin alpha-KTx 27.4.